Consider the following 294-residue polypeptide: Elongation factor Ts (294 aa).

The tract at residues 81-84 (TDFV) is involved in Mg(2+) ion dislocation from EF-Tu.

It belongs to the EF-Ts family.

Its subcellular location is the cytoplasm. Associates with the EF-Tu.GDP complex and induces the exchange of GDP to GTP. It remains bound to the aminoacyl-tRNA.EF-Tu.GTP complex up to the GTP hydrolysis stage on the ribosome. The chain is Elongation factor Ts from Levilactobacillus brevis (strain ATCC 367 / BCRC 12310 / CIP 105137 / JCM 1170 / LMG 11437 / NCIMB 947 / NCTC 947) (Lactobacillus brevis).